Here is a 291-residue protein sequence, read N- to C-terminus: 4-diphosphocytidyl-2-C-methyl-D-erythritol kinase (291 aa).

Lysine 10 is a catalytic residue. 99 to 109 contributes to the ATP binding site; the sequence is PMGGGLGGGSS. Aspartate 141 is an active-site residue.

This sequence belongs to the GHMP kinase family. IspE subfamily. Homodimer.

The enzyme catalyses 4-CDP-2-C-methyl-D-erythritol + ATP = 4-CDP-2-C-methyl-D-erythritol 2-phosphate + ADP + H(+). The protein operates within isoprenoid biosynthesis; isopentenyl diphosphate biosynthesis via DXP pathway; isopentenyl diphosphate from 1-deoxy-D-xylulose 5-phosphate: step 3/6. In terms of biological role, catalyzes the phosphorylation of the position 2 hydroxy group of 4-diphosphocytidyl-2C-methyl-D-erythritol. This chain is 4-diphosphocytidyl-2-C-methyl-D-erythritol kinase, found in Photorhabdus laumondii subsp. laumondii (strain DSM 15139 / CIP 105565 / TT01) (Photorhabdus luminescens subsp. laumondii).